The sequence spans 66 residues: MKQGIHPEYKKVIVRCACGNEFESGSVKDELRVEICSECHPFFTGKQKFVTAAGRVDKFNKKYGLK.

Residues Cys16, Cys18, Cys36, and Cys39 each coordinate Zn(2+).

The protein belongs to the bacterial ribosomal protein bL31 family. Type A subfamily. Part of the 50S ribosomal subunit. Zn(2+) is required as a cofactor.

Its function is as follows. Binds the 23S rRNA. The chain is Large ribosomal subunit protein bL31 from Geobacillus kaustophilus (strain HTA426).